Consider the following 70-residue polypeptide: MPREIKEVKDFLNKARRSDARAVKIKKNPTNTKFKIRCSRFLYTLVVQDKEKADKIKQSLPPGLQVKEVK.

The protein belongs to the eukaryotic ribosomal protein eL38 family.

In Drosophila melanogaster (Fruit fly), this protein is Large ribosomal subunit protein eL38 (RpL38).